A 60-amino-acid chain; its full sequence is Toxin 4.9.6 (60 aa).

4 cysteine pairs are disulfide-bonded: cysteine 3–cysteine 22, cysteine 17–cysteine 38, cysteine 40–cysteine 52, and cysteine 53–cysteine 58.

This sequence belongs to the three-finger toxin family. Short-chain subfamily. Orphan group XI sub-subfamily. As to expression, expressed by the venom gland.

It is found in the secreted. In Dendroaspis viridis (Western green mamba), this protein is Toxin 4.9.6.